Here is a 127-residue protein sequence, read N- to C-terminus: Aspartate 1-decarboxylase (127 aa).

Catalysis depends on Ser25, which acts as the Schiff-base intermediate with substrate; via pyruvic acid. Residue Ser25 is modified to Pyruvic acid (Ser). Residue Thr57 participates in substrate binding. Tyr58 (proton donor) is an active-site residue. 73–75 is a substrate binding site; the sequence is GAA.

It belongs to the PanD family. Heterooctamer of four alpha and four beta subunits. It depends on pyruvate as a cofactor. In terms of processing, is synthesized initially as an inactive proenzyme, which is activated by self-cleavage at a specific serine bond to produce a beta-subunit with a hydroxyl group at its C-terminus and an alpha-subunit with a pyruvoyl group at its N-terminus.

Its subcellular location is the cytoplasm. It carries out the reaction L-aspartate + H(+) = beta-alanine + CO2. It participates in cofactor biosynthesis; (R)-pantothenate biosynthesis; beta-alanine from L-aspartate: step 1/1. Functionally, catalyzes the pyruvoyl-dependent decarboxylation of aspartate to produce beta-alanine. The polypeptide is Aspartate 1-decarboxylase (Aliarcobacter butzleri (strain RM4018) (Arcobacter butzleri)).